We begin with the raw amino-acid sequence, 119 residues long: Ribonuclease P protein component (119 aa).

This sequence belongs to the RnpA family. In terms of assembly, consists of a catalytic RNA component (M1 or rnpB) and a protein subunit.

The catalysed reaction is Endonucleolytic cleavage of RNA, removing 5'-extranucleotides from tRNA precursor.. Its function is as follows. RNaseP catalyzes the removal of the 5'-leader sequence from pre-tRNA to produce the mature 5'-terminus. It can also cleave other RNA substrates such as 4.5S RNA. The protein component plays an auxiliary but essential role in vivo by binding to the 5'-leader sequence and broadening the substrate specificity of the ribozyme. The chain is Ribonuclease P protein component from Aeromonas hydrophila subsp. hydrophila (strain ATCC 7966 / DSM 30187 / BCRC 13018 / CCUG 14551 / JCM 1027 / KCTC 2358 / NCIMB 9240 / NCTC 8049).